The following is a 599-amino-acid chain: Laccase-2 (599 aa).

Residues 1-19 (MARSTTSLFALSLVASAFA) form the signal peptide. Plastocyanin-like domains follow at residues 21-145 (VVDY…IVIY) and 157-307 (VDDE…LVYE). Positions 82, 84, 127, and 129 each coordinate Cu cation. Cysteines 103 and 588 form a disulfide. Residues Asn-207, Asn-208, Asn-231, Asn-397, and Asn-443 are each glycosylated (N-linked (GlcNAc...) asparagine). The Plastocyanin-like 3 domain occupies 450 to 567 (DVPTLLKILT…EGFAMVFAEA (118 aa)). 7 residues coordinate Cu cation: His-497, His-500, His-502, His-549, Cys-550, His-551, and His-555.

Belongs to the multicopper oxidase family. In terms of assembly, homodimer. The cofactor is Cu cation. In terms of tissue distribution, in mycelia, at a lower level than LCC4.

The protein resides in the secreted. It catalyses the reaction 4 hydroquinone + O2 = 4 benzosemiquinone + 2 H2O. Its function is as follows. Lignin degradation and detoxification of lignin-derived products. In Thanatephorus cucumeris (Black scurf of potato), this protein is Laccase-2 (LCC2).